A 185-amino-acid chain; its full sequence is Elongation factor P (185 aa).

The protein belongs to the elongation factor P family.

The protein resides in the cytoplasm. It participates in protein biosynthesis; polypeptide chain elongation. Its function is as follows. Involved in peptide bond synthesis. Stimulates efficient translation and peptide-bond synthesis on native or reconstituted 70S ribosomes in vitro. Probably functions indirectly by altering the affinity of the ribosome for aminoacyl-tRNA, thus increasing their reactivity as acceptors for peptidyl transferase. This Bordetella bronchiseptica (strain ATCC BAA-588 / NCTC 13252 / RB50) (Alcaligenes bronchisepticus) protein is Elongation factor P.